A 402-amino-acid chain; its full sequence is Glutamyl-tRNA reductase (402 aa).

Substrate-binding positions include 48-51, Ser91, 96-98, and Gln102; these read TCNR and EDQ. Cys49 (nucleophile) is an active-site residue. 171–176 lines the NADP(+) pocket; it reads GAGKMG.

This sequence belongs to the glutamyl-tRNA reductase family. In terms of assembly, homodimer.

It catalyses the reaction (S)-4-amino-5-oxopentanoate + tRNA(Glu) + NADP(+) = L-glutamyl-tRNA(Glu) + NADPH + H(+). Its pathway is porphyrin-containing compound metabolism; protoporphyrin-IX biosynthesis; 5-aminolevulinate from L-glutamyl-tRNA(Glu): step 1/2. Functionally, catalyzes the NADPH-dependent reduction of glutamyl-tRNA(Glu) to glutamate 1-semialdehyde (GSA). This chain is Glutamyl-tRNA reductase, found in Methanothermobacter thermautotrophicus (strain ATCC 29096 / DSM 1053 / JCM 10044 / NBRC 100330 / Delta H) (Methanobacterium thermoautotrophicum).